A 688-amino-acid polypeptide reads, in one-letter code: SRSF protein kinase 2 (688 aa).

The disordered stretch occupies residues 1–65 (MSVNSEKSSS…EQEDPADYCK (65 aa)). Residues 22 to 43 (LVPPPPPPPPPPPPPLPDPTPP) are compositionally biased toward pro residues. Positions 44 to 61 (EPEEEILGSDDEEQEDPA) are enriched in acidic residues. At S52 the chain carries Phosphoserine. The Protein kinase domain occupies 81–684 (YHVIRKLGWG…ASAGECLRHP (604 aa)). Residues 87 to 95 (LGWGHFSTV) and K110 each bind ATP. The active-site Proton acceptor is the D214. Disordered regions lie at residues 239–277 (WQKA…KKQK), 329–444 (GLEE…GRHK), and 469–501 (SVLS…TGDL). Basic residues predominate over residues 265-277 (SKNKKKKLKKKQK). Position 380 is a phosphoserine (S380). Over residues 397–421 (QLDDEDDDEEDCPNPEEYNLDEPNA) the composition is skewed to acidic residues. Residues 423-433 (SDYTYSSSYEQ) show a composition bias toward polar residues. Residue S475 is modified to Phosphoserine. T478 carries the post-translational modification Phosphothreonine. 3 positions are modified to phosphoserine: S484, S486, and S490. T492 carries the post-translational modification Phosphothreonine; by PKB/AKT1. Phosphoserine is present on residues S494 and S497. Residue S588 is modified to Phosphoserine; by CK2.

The protein belongs to the protein kinase superfamily. CMGC Ser/Thr protein kinase family. Associates with U4/U6-U5 tri-small nuclear ribonucleoproteins (U4/U6-U5 tri-snRNPs). Interacts with PKB/AKT1 in a phosphorylation-dependent manner. The phosphorylated form (by PKB/AKT1) interacts with YWHAB and YWHAE. Interaction with YWHAB suppresses its cleavage by caspases and inhibits the release of its N-terminal pro-apoptotic fragment. Interacts with SFN. Interacts with ACIN1. Interacts with POLR2A/RNA polymerase II; the interaction occurs during the co-transcriptional formation of inappropriate R-loops. It depends on Mg(2+) as a cofactor. Post-translationally, phosphorylation at Thr-492 by PKB/AKT1 enhances its stimulatory activity in triggering cyclin-D1 (CCND1) expression and promoting apoptosis in neurons, which can be blocked by YWHAB. It also enhances its protein kinase activity toward ACIN1 and SRSF2, promotes its nuclear translocation and prevents its proteolytic cleavage. In terms of processing, proteolytically cleaved at Asp-139 and Asp-403 by caspase-3 during apoptotic cell death. Cleavage at Asp-139 which is the major site of cleavage, produces a small N-terminal fragment that translocates into nucleus and promotes VP16-induced apoptosis. In terms of tissue distribution, highly expressed in brain, moderately expressed in heart and skeletal muscle and at low levels in lung, liver, and kidney.

It is found in the cytoplasm. Its subcellular location is the nucleus. The protein resides in the nucleoplasm. The protein localises to the nucleus speckle. It localises to the chromosome. The catalysed reaction is L-seryl-[protein] + ATP = O-phospho-L-seryl-[protein] + ADP + H(+). It carries out the reaction L-threonyl-[protein] + ATP = O-phospho-L-threonyl-[protein] + ADP + H(+). Activated by phosphorylation on Ser-52 and Ser-588. In terms of biological role, serine/arginine-rich protein-specific kinase which specifically phosphorylates its substrates at serine residues located in regions rich in arginine/serine dipeptides, known as RS domains and is involved in the phosphorylation of SR splicing factors and the regulation of splicing. Promotes neuronal apoptosis by up-regulating cyclin-D1 (CCND1) expression. This is done by the phosphorylation of SRSF2, leading to the suppression of p53/TP53 phosphorylation thereby relieving the repressive effect of p53/TP53 on cyclin-D1 (CCND1) expression. Phosphorylates ACIN1, and redistributes it from the nuclear speckles to the nucleoplasm, resulting in cyclin A1 but not cyclin A2 up-regulation. Plays an essential role in spliceosomal B complex formation via the phosphorylation of DDX23/PRP28. Probably by phosphorylating DDX23, leads to the suppression of incorrect R-loops formed during transcription; R-loops are composed of a DNA:RNA hybrid and the associated non-template single-stranded DNA. Can mediate hepatitis B virus (HBV) core protein phosphorylation. Plays a negative role in the regulation of HBV replication through a mechanism not involving the phosphorylation of the core protein but by reducing the packaging efficiency of the pregenomic RNA (pgRNA) without affecting the formation of the viral core particles. This chain is SRSF protein kinase 2, found in Homo sapiens (Human).